The following is a 283-amino-acid chain: Pre-mRNA-splicing factor CWC23 (283 aa).

The region spanning 15–87 (NLYDVLELPT…DVRPHYDRWL (73 aa)) is the J domain.

The protein belongs to the DnaJ family. As to quaternary structure, belongs to the CWC complex (or CEF1-associated complex), a spliceosome sub-complex reminiscent of a late-stage spliceosome composed of the U2, U5 and U6 snRNAs and at least BUD13, BUD31, BRR2, CDC40, CEF1, CLF1, CUS1, CWC2, CWC15, CWC21, CWC22, CWC23, CWC24, CWC25, CWC27, ECM2, HSH155, IST3, ISY1, LEA1, MSL1, NTC20, PRP8, PRP9, PRP11, PRP19, PRP21, PRP22, PRP45, PRP46, SLU7, SMB1, SMD1, SMD2, SMD3, SMX2, SMX3, SNT309, SNU114, SPP2, SYF1, SYF2, RSE1 and YJU2.

The protein localises to the cytoplasm. It localises to the nucleus. Involved in pre-mRNA splicing. May be involved in endoplasmic reticulum-associated protein degradation (ERAD) and required for growth at low and high temperatures. The sequence is that of Pre-mRNA-splicing factor CWC23 (CWC23) from Saccharomyces cerevisiae (strain ATCC 204508 / S288c) (Baker's yeast).